A 311-amino-acid polypeptide reads, in one-letter code: Ribonuclease HIII (311 aa).

In terms of domain architecture, RNase H type-2 spans M95–K311. A divalent metal cation is bound by residues D101, E102, and D206.

The protein belongs to the RNase HII family. RnhC subfamily. It depends on Mn(2+) as a cofactor. The cofactor is Mg(2+).

The protein localises to the cytoplasm. It catalyses the reaction Endonucleolytic cleavage to 5'-phosphomonoester.. Functionally, endonuclease that specifically degrades the RNA of RNA-DNA hybrids. The protein is Ribonuclease HIII of Bacillus thuringiensis subsp. konkukian (strain 97-27).